The following is a 1514-amino-acid chain: ABC transporter C family member 5 (1514 aa).

The next 10 helical transmembrane spans lie at 16–36 (LLELCSVIINLLLFLVFLFAV), 76–96 (FGFNLSLLCCLYVLGVQVLVL), 111–131 (FVLCFPASQSLAWFVLSFLVL), 142–162 (PFLVRIWWFLAFSICLCTMYV), 177–197 (SHVVANLAVTPALGFLCFLAW), 312–332 (VFAGLNTLVSYVGPYLISYFV), 334–354 (YLGGKEIFPHEGYVLAGIFFT), 421–441 (WYLHDIWMLPMQIVLALAILY), 446–466 (IAAVATLVATIISILVTIPLA), and 533–553 (FIFWSSPIFVAAVTFATSIFL). One can recognise an ABC transmembrane type-1 1 domain in the interval 307–588 (AACNAVFAGL…FPDLVSMMAQ (282 aa)). One can recognise an ABC transporter 1 domain in the interval 622–845 (IEIKDGVFCW…GTDFKALVSA (224 aa)). 657–664 (GTVGSGKS) is an ATP binding site. Positions 899 to 927 (ASDLKAIKEKKKKAKRSRKKQLVQEEERV) form a coiled coil. 6 helical membrane-spanning segments follow: residues 946–966 (GALIPLIILAQAAFQFLQIAS), 986–1006 (PTLLLIVYTALAFGSSVFIFV), 1078–1098 (IVAVMTNVTWQVFLLVVPVAV), 1117–1137 (IVSIQKSPIIHLFGESIAGAA), 1155–1175 (LLDCFVRPFFCSIAAIEWLCL), and 1180–1200 (LSTLVFAFCMVLLVSFPHGTI). The ABC transmembrane type-1 2 domain maps to 949–1231 (IPLIILAQAA…WILSFCKLEN (283 aa)). One can recognise an ABC transporter 2 domain in the interval 1268 to 1502 (IELVDVKVRY…KSSMFLKLVT (235 aa)). Position 1302–1309 (1302–1309 (GRTGSGKS)) interacts with ATP.

Belongs to the ABC transporter superfamily. ABCC family. Conjugate transporter (TC 3.A.1.208) subfamily. As to expression, ubiquitous, mostly in vascular tissues and epidermis, including guard cells.

The protein localises to the membrane. It carries out the reaction ATP + H2O + xenobioticSide 1 = ADP + phosphate + xenobioticSide 2.. (E(2)17G) transport activity in negatively regulated by organic anions such as oestradiol-3-sulfate, luteolin-7-O-diglucuronide-4'-O-glucuronide, glycocholate, vanadate and the sulfonylurea glibenclamide, and, to a lower extent, by bafilomycin A1, NH(4)Cl, GSH, GSSG and DNB-GS. Pump for glutathione S-conjugates. Involved in regulation of K(+) and Na(+) cell content. Mediates resistance to NaCl and Li(+), confers sensitivity to sulfonylurea drugs such as glibenclamide (inducer of stomatal opening), and required for stomatal opening regulation by auxin, abscisic acid (ABA) and external Ca(2+). Transports oestradiol-17-(beta-D-glucuronide) (E(2)17G). Involved in the root auxin content regulation that controls the transition from primary root elongation to lateral root formation. Plays a role in ABA-mediated germination inhibition. High-affinity inositol hexakisphosphate transporter that plays a role in guard cell signaling and phytic acid storage. Required for phytic acid accumulation in developing seeds. Phytic acid is the primary storage form of phosphorus in cereal grains and other plant seeds. The protein is ABC transporter C family member 5 (ABCC5) of Arabidopsis thaliana (Mouse-ear cress).